The following is a 256-amino-acid chain: MIPWLPDDSDSAPFPPTRLALGPDSEAPGLLCAGGQLSVARLRMAYRLGIFPWYSQGQPVLWWSTDPRMVLQVAQFRLHRSLKKTLRRFLVTPGNEVRIDSAFADVIDHCSRTPREGQDGTWIVPEVKAAYVALHRAGSAHSFETWVDGELVGGLYGVNIGRMFYGESMFARRTDASKIALAALVAFCLAHEIAWIDCQMETEHLASLGAQPVPRAQFEAHLRRVVDLPAPKDWFYDPSSWARLGDRGPGQPSPSA.

Residues 1 to 21 (MIPWLPDDSDSAPFPPTRLAL) form a disordered region.

It belongs to the L/F-transferase family.

The protein localises to the cytoplasm. The enzyme catalyses N-terminal L-lysyl-[protein] + L-leucyl-tRNA(Leu) = N-terminal L-leucyl-L-lysyl-[protein] + tRNA(Leu) + H(+). It catalyses the reaction N-terminal L-arginyl-[protein] + L-leucyl-tRNA(Leu) = N-terminal L-leucyl-L-arginyl-[protein] + tRNA(Leu) + H(+). It carries out the reaction L-phenylalanyl-tRNA(Phe) + an N-terminal L-alpha-aminoacyl-[protein] = an N-terminal L-phenylalanyl-L-alpha-aminoacyl-[protein] + tRNA(Phe). Functions in the N-end rule pathway of protein degradation where it conjugates Leu, Phe and, less efficiently, Met from aminoacyl-tRNAs to the N-termini of proteins containing an N-terminal arginine or lysine. The chain is Leucyl/phenylalanyl-tRNA--protein transferase from Leptothrix cholodnii (strain ATCC 51168 / LMG 8142 / SP-6) (Leptothrix discophora (strain SP-6)).